Consider the following 460-residue polypeptide: Citrate synthase, peroxisomal (460 aa).

Residue Ser-21 is modified to Phosphoserine. Residues Lys-218 and Lys-239 each participate in a glycyl lysine isopeptide (Lys-Gly) (interchain with G-Cter in ubiquitin) cross-link. Residues His-293 and His-339 contribute to the active site. Residues Lys-354 and Lys-385 each participate in a glycyl lysine isopeptide (Lys-Gly) (interchain with G-Cter in ubiquitin) cross-link. Asp-394 is a catalytic residue. A C-terminal peroxisome targeting signal (PTS1) motif is present at residues 458–460 (SKL).

The protein belongs to the citrate synthase family. In terms of assembly, interacts with F-box protein UCC1. Post-translationally, ubiquitinated by the E3 ubiquitin-protein ligase complex SCF(UCC1), which leads to its degradation by the proteasome. Ubiquitination is prevented by oxaloacetate, suggesting the existence of an oxaloacetate-dependent positive feedback loop that stabilizes CIT2.

The protein localises to the cytoplasm. The protein resides in the peroxisome. The enzyme catalyses oxaloacetate + acetyl-CoA + H2O = citrate + CoA + H(+). Its pathway is carbohydrate metabolism; tricarboxylic acid cycle; isocitrate from oxaloacetate: step 1/2. Its function is as follows. Peroxisomal citrate synthase involved in the citrate homeostasis. Catalyzes the condensation of acetyl coenzyme A and oxaloacetate to form citrate. Citrate synthase is the rate-limiting enzyme of the tricarboxylic acid (TCA) cycle. This Saccharomyces cerevisiae (strain ATCC 204508 / S288c) (Baker's yeast) protein is Citrate synthase, peroxisomal.